Here is a 206-residue protein sequence, read N- to C-terminus: High frequency lysogenization protein HflD homolog (206 aa).

This sequence belongs to the HflD family.

The protein resides in the cytoplasm. The protein localises to the cell inner membrane. The sequence is that of High frequency lysogenization protein HflD homolog from Pseudomonas aeruginosa (strain LESB58).